The primary structure comprises 494 residues: 3-octaprenyl-4-hydroxybenzoate carboxy-lyase (494 aa).

A Mn(2+)-binding site is contributed by N172. Prenylated FMN-binding positions include 175 to 177 (IYR), 189 to 191 (RWL), and 194 to 195 (RG). E238 contributes to the Mn(2+) binding site. The active-site Proton donor is the D294.

The protein belongs to the UbiD family. As to quaternary structure, homohexamer. Prenylated FMN is required as a cofactor. The cofactor is Mn(2+).

The protein resides in the cell membrane. It catalyses the reaction a 4-hydroxy-3-(all-trans-polyprenyl)benzoate + H(+) = a 2-(all-trans-polyprenyl)phenol + CO2. The protein operates within cofactor biosynthesis; ubiquinone biosynthesis. Its function is as follows. Catalyzes the decarboxylation of 3-octaprenyl-4-hydroxy benzoate to 2-octaprenylphenol, an intermediate step in ubiquinone biosynthesis. This chain is 3-octaprenyl-4-hydroxybenzoate carboxy-lyase, found in Herminiimonas arsenicoxydans.